Here is a 468-residue protein sequence, read N- to C-terminus: Aspartate ammonia-lyase (468 aa).

Threonine 99, serine 138, threonine 139, asparagine 140, and threonine 185 together coordinate L-aspartate. An SS loop region spans residues 315-324 (GSSIMPGKVN). The active-site Proton acceptor is the serine 316. Residues serine 317 and lysine 322 each contribute to the L-aspartate site.

It belongs to the class-II fumarase/aspartase family. Aspartase subfamily. As to quaternary structure, homotetramer.

The enzyme catalyses L-aspartate = fumarate + NH4(+). Catalyzes the reversible conversion of L-aspartate to fumarate and ammonia. In Helicobacter pylori (strain ATCC 700392 / 26695) (Campylobacter pylori), this protein is Aspartate ammonia-lyase (aspA).